A 494-amino-acid chain; its full sequence is DEAD-box ATP-dependent RNA helicase CshA (494 aa).

The short motif at 3–31 (ITFQDFNLSSDLMKAINRMGFEEATPIQA) is the Q motif element. One can recognise a Helicase ATP-binding domain in the interval 34–204 (IPLGLSNKDV…ERFMTEPEHV (171 aa)). 47-54 (AQTGTGKT) contributes to the ATP binding site. Positions 152 to 155 (DEAD) match the DEAD box motif. The region spanning 215 to 375 (NIQQFYLEVQ…RMKEPTLDEA (161 aa)) is the Helicase C-terminal domain. The required for dimerization or oligomerization stretch occupies residues 413 to 494 (VTVVAAAIKM…SGDRRQKKSY (82 aa)). A disordered region spans residues 429–494 (DTPVRLTDEA…SGDRRQKKSY (66 aa)). A compositionally biased stretch (basic residues) spans 443-452 (KRYKNQRSSK). Positions 473–488 (SYDKKRSNDRRSSGDR) are enriched in basic and acidic residues.

Belongs to the DEAD box helicase family. CshA subfamily. Homodimer or oligomer. May interact with RNA helicases CshB and DbpA (DeaD). Probably a component of the RNA degradosome complex composed of rny, rnjA, rnjB, pnp, pfkA and eno, and possibly also rnpA (although rnjA and rnjB's presence is unclear). Interacts with ribosomal proteins L1 and L3 (rplA and rplC) and the protein component of RNase RnpA. Interacts with the RNA polymerase core. Requires Mg(2+) as cofactor.

The protein localises to the cytoplasm. The protein resides in the nucleoid. Its subcellular location is the cell membrane. The enzyme catalyses ATP + H2O = ADP + phosphate + H(+). RNA helicase activity is inhibited by EDTA. The most abundant DEAD-box RNA helicase. An ATP-dependent RNA helicase with RNA-dependent ATPase activity. May work in conjunction with the cold shock proteins to ensure proper initiation of transcription at low and optimal temperatures. In vitro, unwinds dsRNA in both 5'- and 3'- directions. Plays a role in ribosomal 50S subunit assembly. Its deletion leads to changes in mRNA levels for over 200 transcripts. In Bacillus subtilis (strain 168), this protein is DEAD-box ATP-dependent RNA helicase CshA.